We begin with the raw amino-acid sequence, 96 residues long: uncharacterized protein (96 aa).

Helical transmembrane passes span 3-23, 30-50, and 68-88; these read KLTIFSGGLGAVFSVLAQLFA, TLGNLWFLGALAGIITMLASI, and IGLLGTGLVYIIPTLFNIIII.

It localises to the cell membrane. This is an uncharacterized protein from Bacillus subtilis (strain 168).